The primary structure comprises 605 residues: Elongation factor 4 (605 aa).

A tr-type G domain is found at 4–181 (NKIKTFSIIA…AIVEYVPSPL (178 aa)). GTP contacts are provided by residues 16–21 (DHGKST) and 128–131 (NKVD).

The protein belongs to the TRAFAC class translation factor GTPase superfamily. Classic translation factor GTPase family. LepA subfamily.

It localises to the cell membrane. The enzyme catalyses GTP + H2O = GDP + phosphate + H(+). In terms of biological role, required for accurate and efficient protein synthesis under certain stress conditions. May act as a fidelity factor of the translation reaction, by catalyzing a one-codon backward translocation of tRNAs on improperly translocated ribosomes. Back-translocation proceeds from a post-translocation (POST) complex to a pre-translocation (PRE) complex, thus giving elongation factor G a second chance to translocate the tRNAs correctly. Binds to ribosomes in a GTP-dependent manner. This Mycoplasmopsis synoviae (strain 53) (Mycoplasma synoviae) protein is Elongation factor 4.